The following is a 302-amino-acid chain: RNA polymerase II holoenzyme cyclin-like subunit (302 aa).

Residues 53 to 142 (QQLIKLGKRM…LGECEFSLIS (90 aa)) enclose the Cyclin N-terminal domain.

This sequence belongs to the cyclin family. Cyclin C subfamily. As to quaternary structure, component of the srb8-11 complex, a regulatory module of the Mediator complex.

The protein resides in the nucleus. Its function is as follows. Component of the srb8-11 complex. The srb8-11 complex is a regulatory module of the Mediator complex which is itself involved in regulation of basal and activated RNA polymerase II-dependent transcription. The srb8-11 complex may be involved in the transcriptional repression of a subset of genes regulated by Mediator. It may inhibit the association of the Mediator complex with RNA polymerase II to form the holoenzyme complex. The srb8-11 complex phosphorylates the C-terminal domain (CTD) of the largest subunit of RNA polymerase II. This Aspergillus clavatus (strain ATCC 1007 / CBS 513.65 / DSM 816 / NCTC 3887 / NRRL 1 / QM 1276 / 107) protein is RNA polymerase II holoenzyme cyclin-like subunit (ssn8).